Consider the following 333-residue polypeptide: Holliday junction branch migration complex subunit RuvB (333 aa).

The large ATPase domain (RuvB-L) stretch occupies residues 1 to 182; the sequence is MDERLVSGSA…FGVISRLEYY (182 aa). ATP is bound by residues Leu21, Arg22, Gly63, Lys66, Thr67, Thr68, 129–131, Arg172, Tyr182, and Arg219; that span reads EDY. Mg(2+) is bound at residue Thr67. The small ATPAse domain (RuvB-S) stretch occupies residues 183 to 253; sequence QVDQLAQIIE…LAVEALERLQ (71 aa). The tract at residues 256-333 is head domain (RuvB-H); sequence RLGLDHIDHK…AHLGMEVPKR (78 aa). The DNA site is built by Arg311 and Arg316.

This sequence belongs to the RuvB family. Homohexamer. Forms an RuvA(8)-RuvB(12)-Holliday junction (HJ) complex. HJ DNA is sandwiched between 2 RuvA tetramers; dsDNA enters through RuvA and exits via RuvB. An RuvB hexamer assembles on each DNA strand where it exits the tetramer. Each RuvB hexamer is contacted by two RuvA subunits (via domain III) on 2 adjacent RuvB subunits; this complex drives branch migration. In the full resolvosome a probable DNA-RuvA(4)-RuvB(12)-RuvC(2) complex forms which resolves the HJ.

The protein resides in the cytoplasm. The catalysed reaction is ATP + H2O = ADP + phosphate + H(+). In terms of biological role, the RuvA-RuvB-RuvC complex processes Holliday junction (HJ) DNA during genetic recombination and DNA repair, while the RuvA-RuvB complex plays an important role in the rescue of blocked DNA replication forks via replication fork reversal (RFR). RuvA specifically binds to HJ cruciform DNA, conferring on it an open structure. The RuvB hexamer acts as an ATP-dependent pump, pulling dsDNA into and through the RuvAB complex. RuvB forms 2 homohexamers on either side of HJ DNA bound by 1 or 2 RuvA tetramers; 4 subunits per hexamer contact DNA at a time. Coordinated motions by a converter formed by DNA-disengaged RuvB subunits stimulates ATP hydrolysis and nucleotide exchange. Immobilization of the converter enables RuvB to convert the ATP-contained energy into a lever motion, pulling 2 nucleotides of DNA out of the RuvA tetramer per ATP hydrolyzed, thus driving DNA branch migration. The RuvB motors rotate together with the DNA substrate, which together with the progressing nucleotide cycle form the mechanistic basis for DNA recombination by continuous HJ branch migration. Branch migration allows RuvC to scan DNA until it finds its consensus sequence, where it cleaves and resolves cruciform DNA. The polypeptide is Holliday junction branch migration complex subunit RuvB (Geobacillus thermodenitrificans (strain NG80-2)).